Consider the following 228-residue polypeptide: 7-cyano-7-deazaguanine synthase (228 aa).

Position 9–19 (9–19) interacts with ATP; that stretch reads LSGGPDSTTVL. Zn(2+) is bound by residues Cys-193, Cys-203, Cys-206, and Cys-209.

This sequence belongs to the QueC family. Zn(2+) serves as cofactor.

It catalyses the reaction 7-carboxy-7-deazaguanine + NH4(+) + ATP = 7-cyano-7-deazaguanine + ADP + phosphate + H2O + H(+). Its pathway is purine metabolism; 7-cyano-7-deazaguanine biosynthesis. In terms of biological role, catalyzes the ATP-dependent conversion of 7-carboxy-7-deazaguanine (CDG) to 7-cyano-7-deazaguanine (preQ(0)). The chain is 7-cyano-7-deazaguanine synthase from Rickettsia rickettsii (strain Iowa).